Consider the following 106-residue polypeptide: SH3 domain-binding glutamic acid-rich-like protein 2 (106 aa).

An SH3-binding motif is present at residues 61–67; sequence QGNPLPP.

The protein belongs to the SH3BGR family.

The protein resides in the nucleus. The protein is SH3 domain-binding glutamic acid-rich-like protein 2 (sh3bgrl2) of Xenopus tropicalis (Western clawed frog).